A 965-amino-acid polypeptide reads, in one-letter code: Forespore membrane adapter protein MUG56 (965 aa).

Positions 70-175 (SFLMHKSTDE…VQNSNSTSTS (106 aa)) are disordered. Polar residues predominate over residues 82 to 101 (DTPSNLDSPSTQNVGSTNNT). Residues 102–114 (RASQSLLRRSSSF) are compositionally biased toward low complexity. Polar residues predominate over residues 124-158 (THASTDNNPFSESSTLQPQTAERTSQQAVRSAITE). Low complexity predominate over residues 159–175 (TTNPSVSVQNSNSTSTS). 2 PH domains span residues 562–737 (PTPV…EVAS) and 800–961 (VIRM…KEIN).

This sequence belongs to the SPO71 family.

It is found in the cytoplasm. The protein resides in the nucleus. The protein localises to the prospore membrane. In terms of biological role, may recruit a lipid transfer protein to the forespore membrane during sporulation, thereby aiding forespore membrane formation. Required for meiosis. In Schizosaccharomyces pombe (strain 972 / ATCC 24843) (Fission yeast), this protein is Forespore membrane adapter protein MUG56.